The primary structure comprises 469 residues: Glutamine synthetase (469 aa).

The GS beta-grasp domain occupies 13 to 97; it reads HEVKFVDLRF…IRCDILEPGT (85 aa). Residues 105 to 469 form the GS catalytic domain; it reads PRSIAKRAED…PVEFELYYSV (365 aa). 2 residues coordinate Mg(2+): E130 and E132. E208 contacts ATP. Positions 213 and 221 each coordinate Mg(2+). Residues 265–266 and G266 contribute to the L-glutamate site; that span reads NG. H270 contributes to the Mg(2+) binding site. ATP is bound by residues 272 to 274 and S274; that span reads HMS. Residues R322, E328, and R340 each coordinate L-glutamate. Residues R340, R345, and K353 each contribute to the ATP site. E358 serves as a coordination point for Mg(2+). R360 is an L-glutamate binding site. Y398 carries the post-translational modification O-AMP-tyrosine.

It belongs to the glutamine synthetase family. As to quaternary structure, oligomer of 12 subunits arranged in the form of two hexameric ring. Mg(2+) serves as cofactor.

The protein localises to the cytoplasm. It catalyses the reaction L-glutamate + NH4(+) + ATP = L-glutamine + ADP + phosphate + H(+). The activity of this enzyme could be controlled by adenylation under conditions of abundant glutamine. In terms of biological role, catalyzes the ATP-dependent biosynthesis of glutamine from glutamate and ammonia. The chain is Glutamine synthetase from Escherichia coli O157:H7.